The sequence spans 508 residues: UDP-N-acetylmuramyl-tripeptide synthetase (508 aa).

Ser35 is a UDP-N-acetyl-alpha-D-muramoyl-L-alanyl-D-glutamate binding site. 118–124 (GTDGKSS) is a binding site for ATP. Residues 163-164 (ST), Thr190, and Arg200 contribute to the UDP-N-acetyl-alpha-D-muramoyl-L-alanyl-D-glutamate site. Residue Lys232 is modified to N6-carboxylysine.

The protein belongs to the MurCDEF family. MurE subfamily. Post-translationally, carboxylation is probably crucial for Mg(2+) binding and, consequently, for the gamma-phosphate positioning of ATP.

It is found in the cytoplasm. It participates in cell wall biogenesis; peptidoglycan biosynthesis. Catalyzes the addition of an amino acid to the nucleotide precursor UDP-N-acetylmuramoyl-L-alanyl-D-glutamate (UMAG) in the biosynthesis of bacterial cell-wall peptidoglycan. In Borreliella burgdorferi (strain ATCC 35210 / DSM 4680 / CIP 102532 / B31) (Borrelia burgdorferi), this protein is UDP-N-acetylmuramyl-tripeptide synthetase.